Reading from the N-terminus, the 176-residue chain is Protein GrpE (176 aa).

The protein belongs to the GrpE family. Homodimer.

It localises to the cytoplasm. Its function is as follows. Participates actively in the response to hyperosmotic and heat shock by preventing the aggregation of stress-denatured proteins, in association with DnaK and GrpE. It is the nucleotide exchange factor for DnaK and may function as a thermosensor. Unfolded proteins bind initially to DnaJ; upon interaction with the DnaJ-bound protein, DnaK hydrolyzes its bound ATP, resulting in the formation of a stable complex. GrpE releases ADP from DnaK; ATP binding to DnaK triggers the release of the substrate protein, thus completing the reaction cycle. Several rounds of ATP-dependent interactions between DnaJ, DnaK and GrpE are required for fully efficient folding. This Thermoplasma volcanium (strain ATCC 51530 / DSM 4299 / JCM 9571 / NBRC 15438 / GSS1) protein is Protein GrpE.